The primary structure comprises 1128 residues: Nck-associated protein 1 (1128 aa).

S2 bears the N-acetylserine mark. Residues A640 to M665 are disordered. Basic and acidic residues predominate over residues K651–M665. A helical membrane pass occupies residues I995–M1015.

Belongs to the HEM-1/HEM-2 family. As to quaternary structure, component of the WAVE1 complex composed of ABI2, CYFIP1 or CYFIP2, BRK1, NCKAP1 and WASF1/WAVE1. Within the complex, a heterodimer containing NCKAP1 and CYFIP1 interacts with a heterotrimer formed by WAVE1, ABI2 and BRK1. Component of the WAVE2 complex composed of ABI1, CYFIP1/SRA1, NCKAP1/NAP1 and WASF2/WAVE2. CYFIP2 binds to activated RAC1 which causes the complex to dissociate, releasing activated WASF1. The complex can also be activated by NCK1. Associates preferentially with the first SH3 domain of NCK. Interacts with NYAP1, NYAP2 and MYO16. Interacts with TMEM132D. As to expression, preferentially expressed in brain, heart, liver and testis.

The protein localises to the cell membrane. Its subcellular location is the cell projection. The protein resides in the lamellipodium membrane. In terms of biological role, part of the WAVE complex that regulates lamellipodia formation. The WAVE complex regulates actin filament reorganization via its interaction with the Arp2/3 complex. Actin remodeling activity is regulated by RAC1. As component of the WAVE1 complex, required for BDNF-NTRK2 endocytic trafficking and signaling from early endosomes. This Rattus norvegicus (Rat) protein is Nck-associated protein 1 (Nckap1).